The following is a 460-amino-acid chain: Cysteine--tRNA ligase (460 aa).

Cys-27 is a binding site for Zn(2+). Positions 29 to 39 (PTVYDLIHVGN) match the 'HIGH' region motif. Positions 207, 232, and 236 each coordinate Zn(2+). Positions 264 to 268 (KMSKS) match the 'KMSKS' region motif. Residue Lys-267 participates in ATP binding.

The protein belongs to the class-I aminoacyl-tRNA synthetase family. In terms of assembly, monomer. Zn(2+) is required as a cofactor.

The protein localises to the cytoplasm. The catalysed reaction is tRNA(Cys) + L-cysteine + ATP = L-cysteinyl-tRNA(Cys) + AMP + diphosphate. This is Cysteine--tRNA ligase from Thermotoga petrophila (strain ATCC BAA-488 / DSM 13995 / JCM 10881 / RKU-1).